The primary structure comprises 236 residues: NEP1-interacting protein 1 (236 aa).

Over methionine 1 to alanine 44 the chain is Lumenal, thylakoid. Residues valine 45–isoleucine 65 traverse the membrane as a helical segment. Over glycine 66–alanine 78 the chain is Stromal. The helical transmembrane segment at valine 79–tryptophan 99 threads the bilayer. Residues lysine 100–serine 104 are Lumenal, thylakoid-facing. A helical membrane pass occupies residues arginine 105–valine 125. At arginine 126 to leucine 236 the chain is on the stromal side. An RING-type; atypical zinc finger spans residues cysteine 191–arginine 233.

The protein belongs to the RING-type zinc finger family. NIP subfamily. Interacts with RPOT2.

It localises to the plastid. Its subcellular location is the chloroplast thylakoid membrane. Functionally, intrinsic thylakoid membrane protein that fixes RPOT2 on the stromal side of the thylakoid membrane. This Arabidopsis thaliana (Mouse-ear cress) protein is NEP1-interacting protein 1 (NIP1).